Consider the following 210-residue polypeptide: Imidazoleglycerol-phosphate dehydratase (210 aa).

This sequence belongs to the imidazoleglycerol-phosphate dehydratase family.

The protein resides in the cytoplasm. It carries out the reaction D-erythro-1-(imidazol-4-yl)glycerol 3-phosphate = 3-(imidazol-4-yl)-2-oxopropyl phosphate + H2O. It participates in amino-acid biosynthesis; L-histidine biosynthesis; L-histidine from 5-phospho-alpha-D-ribose 1-diphosphate: step 6/9. The chain is Imidazoleglycerol-phosphate dehydratase from Mycobacterium marinum (strain ATCC BAA-535 / M).